The chain runs to 215 residues: MQYNIILLVDGSLSLEQANQVNEKQQQTLTNVEGLQTEYLGLKELAYPIKKQLSAHYYRWKFSGDNQSTKDFKRTANINKQVLRELIINLEREYGYLASINPKKQQLALQKRAKYDEIIARENNPENPDVPVTSGLASTQPRLSRTEKAQKPKEELWDVVQKMGNFDSVQANPYRPRFKRFNAEHVNQRQNQQNNNNNRFDRNRNRQHNRFKDKQ.

Disordered stretches follow at residues 121 to 153 (RENN…QKPK) and 187 to 215 (NQRQ…KDKQ). Over residues 144–153 (SRTEKAQKPK) the composition is skewed to basic and acidic residues. The span at 188 to 198 (QRQNQQNNNNN) shows a compositional bias: low complexity. Residues 199–215 (RFDRNRNRQHNRFKDKQ) are compositionally biased toward basic and acidic residues.

Belongs to the bacterial ribosomal protein bS6 family.

Its function is as follows. Binds together with bS18 to 16S ribosomal RNA. This chain is Small ribosomal subunit protein bS6 (rpsF), found in Mycoplasma pneumoniae (strain ATCC 29342 / M129 / Subtype 1) (Mycoplasmoides pneumoniae).